A 322-amino-acid polypeptide reads, in one-letter code: Basic 30 kDa endochitinase (322 aa).

The signal sequence occupies residues 1-22; sequence MRLSEFTTLFLLFSVLLLSASA. Residues 23-64 form the Chitin-binding type-1 domain; the sequence is EQCGSQAGGALCASGLCCSKFGWCGNTNEYCGPGNCQSQCPG. 4 disulfides stabilise this stretch: cysteine 25-cysteine 40, cysteine 34-cysteine 46, cysteine 39-cysteine 53, and cysteine 58-cysteine 62. A 4-hydroxyproline mark is found at proline 66 and proline 68. 3 disulfide bridges follow: cysteine 93–cysteine 156, cysteine 168–cysteine 176, and cysteine 275–cysteine 307. Glutamate 138 serves as the catalytic Proton donor. Residues 316–322 constitute a propeptide, removed in mature form; it reads GLLVDIM.

Belongs to the glycosyl hydrolase 19 family. Chitinase class I subfamily. The 4-hydroxyproline residues are not glycosylated in this plant vacuolar protein.

It localises to the vacuole. It is found in the secreted. The protein localises to the cell wall. It carries out the reaction Random endo-hydrolysis of N-acetyl-beta-D-glucosaminide (1-&gt;4)-beta-linkages in chitin and chitodextrins.. Its function is as follows. Defense against chitin-containing fungal pathogens. In Solanum lycopersicum (Tomato), this protein is Basic 30 kDa endochitinase (CHI9).